A 1659-amino-acid chain; its full sequence is Daxx-like protein (1659 aa).

Disordered stretches follow at residues 1–25 (MSASVICVDLSSESDEESPAKRRRL) and 265–336 (QLQQ…VRSL). The stretch at 438–469 (LGQLQQEQQKILGQLQQQKQQQQQQQKKILGQ) forms a coiled coil. Low complexity-rich tracts occupy residues 506 to 520 (SVGQLQQQQPHQSQQ), 528 to 542 (KQQPQQQKKISVGQF), and 600 to 625 (GQLQRQTQQQQKTSAGQFQQQPQQQQ). Disordered regions lie at residues 506–542 (SVGQLQQQQPHQSQQKNSMVHVKQQPQQQKKISVGQF), 600–645 (GQLQ…TLAG), 658–713 (SAGQ…MPQK), 872–894 (TLPFRSSQRKTSEAPMTSTHVQG), 924–952 (LPPTTSITPQLTPTTTPPPAGPSAAVQQQ), 1023–1060 (VESPPTTPPTDKPEPERGPMTVEKSSIKPMATDKQSRA), and 1536–1555 (FKIADDGDDSEEESDSEDDD). A compositionally biased stretch (polar residues) spans 626–635 (KISAGQLQEH). Composition is skewed to low complexity over residues 636-645 (SQQQQKTLAG) and 658-698 (SAGQ…QPQQ). Composition is skewed to polar residues over residues 699-711 (RTSAGLLQQQQMP) and 885-894 (APMTSTHVQG). Residues 870-1659 (ARTLPFRSSQ…DQIIISDEES (790 aa)) form a necessary for interaction with His3.3A and His3.3B region. Low complexity predominate over residues 924 to 937 (LPPTTSITPQLTPT). The span at 1541-1555 (DGDDSEEESDSEDDD) shows a compositional bias: acidic residues.

As to quaternary structure, interacts with p53 (via C-terminus). Interacts (via C-terminus) with His3.3A and His3.3B. Interacts with asf1. As to expression, ubiquitously expressed with higher levels in the head (at protein level). Expressed in the germ line, with prominent expression in primary spermatocytes and meiotic spermatocytes (at protein level). In ovaries, expressed in nurse cells and in the germinal vesicle of the ovarian follicle at stage 10 (at protein level).

It localises to the cytoplasm. The protein localises to the cytosol. Its subcellular location is the nucleus. The protein resides in the chromosome. Transcription regulator. Acts as a histone chaperone that facilitates deposition of histone H3.3. Has a role in chromatin remodeling together with asf1 and XNP. Has role in the transcriptional apoptotic response to oxidative and UV stress. This chain is Daxx-like protein, found in Drosophila melanogaster (Fruit fly).